The sequence spans 624 residues: Exonuclease V, mitochondrial (624 aa).

A mitochondrion-targeting transit peptide spans 1 to 61 (MSRFWHFKKF…RSLLSEDANP (61 aa)). The interval 37-80 (TSKHEQEQPITNDEPRSLLSEDANPSPDVESEPELESEQSENRE) is disordered. A compositionally biased stretch (acidic residues) spans 65–75 (VESEPELESEQ). Residues cysteine 160, cysteine 582, cysteine 585, and cysteine 591 each coordinate [4Fe-4S] cluster.

The protein belongs to the EXO5 family. In terms of assembly, monomer. Mg(2+) serves as cofactor. [4Fe-4S] cluster is required as a cofactor.

It is found in the mitochondrion. In terms of biological role, single strand DNA specific 5'exonuclease involved in mitochondrial DNA replication and recombination. Releases dinucleotides as main products of catalysis. Has the capacity to slide across 5'double-stranded DNA or 5'RNA sequences and resumes cutting two nucleotides downstream of the double-stranded-to-single-stranded junction or RNA-to-DNA junction, respectively. The protein is Exonuclease V, mitochondrial (EXO5) of Candida dubliniensis (strain CD36 / ATCC MYA-646 / CBS 7987 / NCPF 3949 / NRRL Y-17841) (Yeast).